Reading from the N-terminus, the 247-residue chain is Programmed cell death 1 ligand 2 (247 aa).

The signal sequence occupies residues 1–19 (MLLLLPILNLSLQLHPVAA). Topologically, residues 20–221 (LFTVTAPKEV…RMEPKVPRTW (202 aa)) are extracellular. The Ig-like V-type domain maps to 21 to 118 (FTVTAPKEVY…AWDYKYLTVK (98 aa)). Disulfide bonds link cysteine 42-cysteine 102 and cysteine 143-cysteine 192. N-linked (GlcNAc...) asparagine glycans are attached at residues asparagine 64, asparagine 157, asparagine 163, and asparagine 189. Residues 122 to 203 (SYMRIDTRIL…FWNAHMKELT (82 aa)) form the Ig-like C2-type domain. The chain crosses the membrane as a helical span at residues 222-242 (PLHVFIPACTIALIFLAIVII). At 243–247 (QRKRI) the chain is on the cytoplasmic side.

Belongs to the immunoglobulin superfamily. BTN/MOG family. Interacts with PDCD1. Expressed in immature and mature bone marrow-derived dendritic cells and splenic dendritic cells. Highly expressed in placenta, liver and weakly expressed in heart, spleen, lymph nodes and thymus. Also expressed in some tumor cell lines of lymphoid origin.

The protein resides in the cell membrane. Its function is as follows. Involved in the costimulatory signal essential for T-cell proliferation and IFNG production in a PDCD1-independent manner. Interaction with PDCD1 inhibits T-cell proliferation by blocking cell cycle progression and cytokine production. The polypeptide is Programmed cell death 1 ligand 2 (Pdcd1lg2) (Mus musculus (Mouse)).